A 163-amino-acid chain; its full sequence is Putative defense protein 3 (163 aa).

Positions 1-18 (MMFAYIVAVVSALALTSA) are cleaved as a signal peptide. In terms of domain architecture, Reelin spans 19-163 (YPTGAPSSTC…SAPVTVLSHK (145 aa)). Residues C28 and C103 are joined by a disulfide bond.

It belongs to the insect defense protein family.

It localises to the secreted. Functionally, may have antimicrobial activity. The chain is Putative defense protein 3 from Antheraea mylitta (Tasar silkworm).